Reading from the N-terminus, the 196-residue chain is Sesquiterpene phosphatase astK (196 aa).

It belongs to the HAD-like hydrolase superfamily.

The enzyme catalyses (S,S)-drim-8-en-11-yl phosphate + H2O = (S,S)-drim-8-en-11-ol + phosphate. It functions in the pathway secondary metabolite biosynthesis; terpenoid biosynthesis. Its function is as follows. Sesquiterpene phosphatase; part of the gene cluster that mediates the biosynthesis of astellolides, drimane-type sesquiterpene esters that show antimicrobial, anti-inflammatory, and anti-tumor activities. The first step in astellolide biosynthesis is performed by the sesquiterpene cyclase astC that catalyzes the formation of drimanyl pyrophosphate from farnesyl pyrophosphate. Drimanyl pyrophosphate is then dephosphorylated by the sesquiterpene phosphatase astI to produce drimanyl monophosphate which is further dephosphorylated to drim-8-ene-11-ol by atsK. Drim-8-ene-11-ol is converted to confertifolin, probably by the cytochrome P450 monooxygenase astD and/or the dehydrogenase astE. The cytochrome P450 monooxygenases astB, astF and astJ then hydroxylate confertifolin at C6, C14, or C15 to form trihydroxy confertifolin. The nonribosomal peptide synthetase astA catalyzes ester bond formation between trihydroxy contifolin and benzoic acid (BA) or 4-hydroxy benzoic acid (4HBA), leading to the formation of dideacetyl astellolides A and B, respectively. Finally, the O-acetyltransferase astG converts dideacetyl astellolides A and B into deacetyl astellolides A and B. In Aspergillus oryzae (strain ATCC 42149 / RIB 40) (Yellow koji mold), this protein is Sesquiterpene phosphatase astK.